Consider the following 372-residue polypeptide: tRNA-specific 2-thiouridylase MnmA 1 (372 aa).

ATP contacts are provided by residues Ala-26–Ser-33 and Met-52. Cys-118 functions as the Nucleophile in the catalytic mechanism. Cysteines 118 and 214 form a disulfide. Residue Gly-142 coordinates ATP. Residues Lys-164–Gln-166 are interaction with tRNA. The Cysteine persulfide intermediate role is filled by Cys-214.

It belongs to the MnmA/TRMU family.

Its subcellular location is the cytoplasm. The enzyme catalyses S-sulfanyl-L-cysteinyl-[protein] + uridine(34) in tRNA + AH2 + ATP = 2-thiouridine(34) in tRNA + L-cysteinyl-[protein] + A + AMP + diphosphate + H(+). Catalyzes the 2-thiolation of uridine at the wobble position (U34) of tRNA, leading to the formation of s(2)U34. The protein is tRNA-specific 2-thiouridylase MnmA 1 of Syntrophus aciditrophicus (strain SB).